Reading from the N-terminus, the 334-residue chain is Mevalonate kinase (334 aa).

110–120 (PVGAGLGSSAA) contributes to the ATP binding site. The active-site Proton acceptor is Asp161.

This sequence belongs to the GHMP kinase family. Mevalonate kinase subfamily. In terms of assembly, homodimer. Mg(2+) is required as a cofactor.

It is found in the cytoplasm. The catalysed reaction is (R)-mevalonate + ATP = (R)-5-phosphomevalonate + ADP + H(+). The protein operates within isoprenoid biosynthesis; isopentenyl diphosphate biosynthesis via mevalonate pathway; isopentenyl diphosphate from (R)-mevalonate: step 1/3. Its function is as follows. Catalyzes the phosphorylation of (R)-mevalonate (MVA) to (R)-mevalonate 5-phosphate (MVAP). Functions in the mevalonate (MVA) pathway leading to isopentenyl diphosphate (IPP), a key precursor for the biosynthesis of isoprenoid compounds such as archaeal membrane lipids. In Pyrococcus furiosus (strain ATCC 43587 / DSM 3638 / JCM 8422 / Vc1), this protein is Mevalonate kinase.